A 309-amino-acid polypeptide reads, in one-letter code: Ribonuclease Z (309 aa).

Positions 63, 65, 67, 68, 141, 212, and 270 each coordinate Zn(2+). D67 acts as the Proton acceptor in catalysis.

The protein belongs to the RNase Z family. As to quaternary structure, homodimer. Requires Zn(2+) as cofactor.

It catalyses the reaction Endonucleolytic cleavage of RNA, removing extra 3' nucleotides from tRNA precursor, generating 3' termini of tRNAs. A 3'-hydroxy group is left at the tRNA terminus and a 5'-phosphoryl group is left at the trailer molecule.. Functionally, zinc phosphodiesterase, which displays some tRNA 3'-processing endonuclease activity. Probably involved in tRNA maturation, by removing a 3'-trailer from precursor tRNA. In Lactobacillus delbrueckii subsp. bulgaricus (strain ATCC 11842 / DSM 20081 / BCRC 10696 / JCM 1002 / NBRC 13953 / NCIMB 11778 / NCTC 12712 / WDCM 00102 / Lb 14), this protein is Ribonuclease Z.